Here is a 629-residue protein sequence, read N- to C-terminus: MFYQDPFDVIIIGGGHAGTEAAMAAARMGQQTLLLTHNIDTLGQMSCNPAIGGIGKGHLVKEVDALGGLMAKAIDQAGIQFRILNASKGPAVRATRAQADRVLYRQAVRTALENQPNLMIFQQAVEDLIVENDRVVGAVTQMGLKFRAKAVVLTVGTFLDGKIHIGLDNYSGGRAGDPPSIPLSRRLRELPLRVSRLKTGTPPRIDARTIDFSVLAQQHGDNPMPVFSFMGSADQHPRQVPCYITHTNEKTHDVIRNNLDRSPMYAGVIEGIGPRYCPSIEDKVMRFADRNQHQIFLEPEGLTSNEIYPNGISTSLPFDVQMQIVRSMQGMENARIVRPGYAIEYDFFDPRDLKPTLESKFIQGLFFAGQINGTTGYEEAAAQGLLAGLNAARFSAEKEGWAPRRDQAYLGVLVDDLCTLGTKEPYRMFTSRAEYRLMLREDNADLRLTEQGRELGLVDDERWARYNEKLESIERERQRLKSTWVNPQAESANEVNAHLTAPLSREASGEDLLRRPEMTYEQLVQLSPFTPGLEDRQAAEQVEIQVKYEGYIARQQDEIEKQQRNENTLLPATLDYRQVTGLSNEVIAKLNDHKPSSIGQASRISGITPAAISILLVWLKKQGMLRRSA.

FAD-binding positions include 13-18 (GGGHAG), Val-125, and Ser-180. An NAD(+)-binding site is contributed by 273–287 (GPRYCPSIEDKVMRF). Gln-370 contributes to the FAD binding site.

It belongs to the MnmG family. Homodimer. Heterotetramer of two MnmE and two MnmG subunits. FAD is required as a cofactor.

The protein localises to the cytoplasm. In terms of biological role, NAD-binding protein involved in the addition of a carboxymethylaminomethyl (cmnm) group at the wobble position (U34) of certain tRNAs, forming tRNA-cmnm(5)s(2)U34. This is tRNA uridine 5-carboxymethylaminomethyl modification enzyme MnmG from Klebsiella pneumoniae subsp. pneumoniae (strain ATCC 700721 / MGH 78578).